A 102-amino-acid polypeptide reads, in one-letter code: Putative pterin-4-alpha-carbinolamine dehydratase (102 aa).

This sequence belongs to the pterin-4-alpha-carbinolamine dehydratase family.

It carries out the reaction (4aS,6R)-4a-hydroxy-L-erythro-5,6,7,8-tetrahydrobiopterin = (6R)-L-erythro-6,7-dihydrobiopterin + H2O. This is Putative pterin-4-alpha-carbinolamine dehydratase from Burkholderia ambifaria (strain MC40-6).